Reading from the N-terminus, the 275-residue chain is Shikimate dehydrogenase (NADP(+)) (275 aa).

Shikimate is bound by residues 15-17 (SKS) and Thr-62. Residue Lys-66 is the Proton acceptor of the active site. Glu-78 contributes to the NADP(+) binding site. Asn-87 and Asp-102 together coordinate shikimate. NADP(+) contacts are provided by residues 127 to 131 (GAGGA), 151 to 156 (NRTPQK), and Met-215. Residue Tyr-217 coordinates shikimate. NADP(+) is bound at residue Gly-239.

This sequence belongs to the shikimate dehydrogenase family. As to quaternary structure, homodimer.

The enzyme catalyses shikimate + NADP(+) = 3-dehydroshikimate + NADPH + H(+). It participates in metabolic intermediate biosynthesis; chorismate biosynthesis; chorismate from D-erythrose 4-phosphate and phosphoenolpyruvate: step 4/7. Functionally, involved in the biosynthesis of the chorismate, which leads to the biosynthesis of aromatic amino acids. Catalyzes the reversible NADPH linked reduction of 3-dehydroshikimate (DHSA) to yield shikimate (SA). The chain is Shikimate dehydrogenase (NADP(+)) from Nitrosospira multiformis (strain ATCC 25196 / NCIMB 11849 / C 71).